The chain runs to 223 residues: 3,4-dihydroxy-2-butanone 4-phosphate synthase (223 aa).

D-ribulose 5-phosphate is bound by residues 47–48 (RE), Asp52, 160–164 (RRGHT), and Glu184. Glu48 provides a ligand contact to Mg(2+). His163 contacts Mg(2+).

This sequence belongs to the DHBP synthase family. In terms of assembly, homodimer. Requires Mg(2+) as cofactor. Mn(2+) is required as a cofactor.

It catalyses the reaction D-ribulose 5-phosphate = (2S)-2-hydroxy-3-oxobutyl phosphate + formate + H(+). The protein operates within cofactor biosynthesis; riboflavin biosynthesis; 2-hydroxy-3-oxobutyl phosphate from D-ribulose 5-phosphate: step 1/1. Its function is as follows. Catalyzes the conversion of D-ribulose 5-phosphate to formate and 3,4-dihydroxy-2-butanone 4-phosphate. The protein is 3,4-dihydroxy-2-butanone 4-phosphate synthase of Cupriavidus pinatubonensis (strain JMP 134 / LMG 1197) (Cupriavidus necator (strain JMP 134)).